A 78-amino-acid chain; its full sequence is Protein EcdD (78 aa).

Involved in the non-oxidative decarboxylation and detoxification of phenolic derivatives under anaerobic conditions, however the precise biochemical function in metabolism of phenolic acid is unknown. This is Protein EcdD from Escherichia coli O157:H7.